Here is a 533-residue protein sequence, read N- to C-terminus: Beta-1,4 N-acetylgalactosaminyltransferase 1 (533 aa).

The Cytoplasmic segment spans residues 1-7 (MWLGRRA). Residues 8 to 25 (LCALVLLLACASLGLLYA) form a helical; Signal-anchor for type II membrane protein membrane-spanning segment. Over 26-533 (STRDAPGLRL…KHRLQCMTSQ (508 aa)) the chain is Lumenal. N79, N179, and N274 each carry an N-linked (GlcNAc...) asparagine glycan. A disulfide bridge links C429 with C476.

The protein belongs to the glycosyltransferase 2 family. In terms of assembly, homodimer; disulfide-linked.

The protein localises to the golgi apparatus membrane. The catalysed reaction is a ganglioside GM3 (d18:1(4E)) + UDP-N-acetyl-alpha-D-galactosamine = a ganglioside GM2 (d18:1(4E)) + UDP + H(+). It catalyses the reaction a ganglioside GM3 + UDP-N-acetyl-alpha-D-galactosamine = a ganglioside GM2 + UDP + H(+). It carries out the reaction a ganglioside GD3 + UDP-N-acetyl-alpha-D-galactosamine = a ganglioside GD2 + UDP + H(+). The enzyme catalyses a ganglioside GD3 (d18:1(4E)) + UDP-N-acetyl-alpha-D-galactosamine = a ganglioside GD2 (d18:1(4E)) + UDP + H(+). The catalysed reaction is a beta-D-Gal-(1-&gt;4)-beta-D-Glc-(1&lt;-&gt;1)-Cer(d18:1(4E)) + UDP-N-acetyl-alpha-D-galactosamine = a ganglioside GA2 (d18:1(4E)) + UDP + H(+). It catalyses the reaction a ganglioside GD1a + UDP-N-acetyl-alpha-D-galactosamine = a ganglioside GalNAc-GD1a + UDP + H(+). It carries out the reaction a ganglioside GT3 (d18:1(4E)) + UDP-N-acetyl-alpha-D-galactosamine = a ganglioside GT2 (d18:1(4E)) + UDP + H(+). The enzyme catalyses a beta-D-galactosyl-(1-&gt;4)-beta-D-glucosyl-(1&lt;-&gt;1)-ceramide + UDP-N-acetyl-alpha-D-galactosamine = a ganglioside GA2 + UDP + H(+). The catalysed reaction is a neolactoside IV(3)-alpha-NeuGc-nLc4Cer + UDP-N-acetyl-alpha-D-galactosamine = a neolactoside IV(4)-beta-GalNAc-IV(3)-alpha-NeuGc-nLc4Cer + UDP + H(+). Its pathway is sphingolipid metabolism. In terms of biological role, involved in the biosynthesis of gangliosides GM2, GD2, GT2 and GA2 from GM3, GD3, GT3 and GA3, respectively. The polypeptide is Beta-1,4 N-acetylgalactosaminyltransferase 1 (Homo sapiens (Human)).